The primary structure comprises 222 residues: Probable RNA 2'-phosphotransferase (222 aa).

The protein belongs to the KptA/TPT1 family.

Its function is as follows. Removes the 2'-phosphate from RNA via an intermediate in which the phosphate is ADP-ribosylated by NAD followed by a presumed transesterification to release the RNA and generate ADP-ribose 1''-2''-cyclic phosphate (APPR&gt;P). May function as an ADP-ribosylase. The chain is Probable RNA 2'-phosphotransferase from Haloarcula marismortui (strain ATCC 43049 / DSM 3752 / JCM 8966 / VKM B-1809) (Halobacterium marismortui).